Consider the following 391-residue polypeptide: Isocitrate dehydrogenase [NADP] (391 aa).

Residues Ser-102, Asn-104, Arg-108, Arg-118, and Arg-142 each contribute to the D-threo-isocitrate site. Position 283 (Asp-283) interacts with Mg(2+).

It belongs to the isocitrate and isopropylmalate dehydrogenases family. In terms of assembly, homodimer. The cofactor is Mg(2+). It depends on Mn(2+) as a cofactor.

The catalysed reaction is D-threo-isocitrate + NADP(+) = 2-oxoglutarate + CO2 + NADPH. Its function is as follows. Catalyzes the oxidative decarboxylation of isocitrate to 2-oxoglutarate and carbon dioxide with the concomitant reduction of NADP(+). This Streptococcus salivarius protein is Isocitrate dehydrogenase [NADP] (icd).